The chain runs to 505 residues: Catalase (505 aa).

The tract at residues 1-25 (MSQQDKKLTGVFGHPVSDRENSMTA) is disordered. Residues His-56 and Asn-129 contribute to the active site. Residue Tyr-339 participates in heme binding.

It belongs to the catalase family. In terms of assembly, homodimer. Heme is required as a cofactor.

It catalyses the reaction 2 H2O2 = O2 + 2 H2O. Its function is as follows. Decomposes hydrogen peroxide into water and oxygen; serves to protect cells from the toxic effects of hydrogen peroxide. This Staphylococcus aureus protein is Catalase (katA).